Reading from the N-terminus, the 382-residue chain is Proton extrusion protein PxcA (382 aa).

The next 4 helical transmembrane spans lie at 156–176 (TLIS…VQQV), 257–277 (AVKN…VCVF), 305–325 (IILF…TVLL), and 340–360 (FILL…KYWI).

Belongs to the CemA family.

The protein resides in the cell inner membrane. Its function is as follows. Required for H(+) efflux immediately after light irradiation to form a rapid H(+) concentration gradient across the thylakoid membranes. Together with PxcL, contributes to transient H(+) uptake following dark to light transition. This Synechococcus sp. (strain WH7803) protein is Proton extrusion protein PxcA.